Here is a 367-residue protein sequence, read N- to C-terminus: Peptide chain release factor 2 (367 aa).

Gln-254 carries the N5-methylglutamine modification.

Belongs to the prokaryotic/mitochondrial release factor family. Methylated by PrmC. Methylation increases the termination efficiency of RF2.

The protein resides in the cytoplasm. Its function is as follows. Peptide chain release factor 2 directs the termination of translation in response to the peptide chain termination codons UGA and UAA. The protein is Peptide chain release factor 2 of Leptospira interrogans serogroup Icterohaemorrhagiae serovar Lai (strain 56601).